Here is an 886-residue protein sequence, read N- to C-terminus: Putative leucine-rich repeat receptor-like serine/threonine-protein kinase At2g14440 (886 aa).

An N-terminal signal peptide occupies residues 1–23; it reads METRSKLMLLACATFSIISLVKS. Topologically, residues 24-528 are extracellular; that stretch reads QNQQGFISLY…KHQPKSWLVA (505 aa). N49, N69, N232, N236, N259, N292, N434, N447, N458, and N471 each carry an N-linked (GlcNAc...) asparagine glycan. 4 LRR repeats span residues 413-436, 437-460, 461-483, and 485-507; these read RIIS…QNLT, MLRE…QNLT, MLRE…LATI, and PLLV…LQDR. The chain crosses the membrane as a helical span at residues 529–549; the sequence is IVASISCVAVTIIVLVLIFIF. The Cytoplasmic portion of the chain corresponds to 550 to 886; it reads RRRKSSTRKV…TFISDIPSAR (337 aa). Residues 581 to 850 form the Protein kinase domain; the sequence is NNFEVVLGKG…NMTRVAHELN (270 aa). ATP contacts are provided by residues 587–595 and K608; that span reads LGKGGFGVV. Y653 is modified (phosphotyrosine). Residue D705 is the Proton acceptor of the active site. S739 is subject to Phosphoserine. A phosphothreonine mark is found at T740 and T745. Residue Y753 is modified to Phosphotyrosine. The tract at residues 863 to 886 is disordered; it reads SQDQNSSKSSGHTVTFISDIPSAR. Residues 865–878 are compositionally biased toward polar residues; that stretch reads DQNSSKSSGHTVTF.

The protein belongs to the protein kinase superfamily. Ser/Thr protein kinase family.

It localises to the cell membrane. It carries out the reaction L-seryl-[protein] + ATP = O-phospho-L-seryl-[protein] + ADP + H(+). The catalysed reaction is L-threonyl-[protein] + ATP = O-phospho-L-threonyl-[protein] + ADP + H(+). The protein is Putative leucine-rich repeat receptor-like serine/threonine-protein kinase At2g14440 of Arabidopsis thaliana (Mouse-ear cress).